A 622-amino-acid chain; its full sequence is MSTDNKQSLPAITLAAIGVVYGDIGTSPLYTLRECLSGQFGFGVERDAVFGFLSLIFWLLIFVVSIKYLTFVMRADNAGEGGILTLMSLAGRNTSARTTSMLVIMGLIGGSFFYGEVVITPAISVMSAIEGLEIVAPQLDTWIVPLSIIVLTLLFMIQKHGTAMVGKLFAPIMLTWFLILAGLGLRSIIANPEVLHALNPMWAMHFFLEYKTVSFIALGAVVLSITGVEALYADMGHFGKFPIRLAWFTVVLPSLTLNYFGQGALLLKNPEAIKNPFFLLAPDWALIPLLIIAALATVIASQAVISGVFSLTRQAVRLGYLSPMRIIHTSEMESGQIYIPFVNWMLYVAVVIVIVSFEHSSNLAAAYGIAVTGTMVLTSILSTTVARQNWHWNKYFVALILIAFLCVDIPLFTANLDKLLSGGWLPLSLGTVMFIVMTTWKSERFRLLRRMHEHGNSLEAMIASLEKSPPVRVPGTAVYMSRAINVIPFALMHNLKHNKVLHERVILLTLRTEDAPYVHNVRRVQIEQLSPTFWRVVASYGWRETPNVEEVFHRCGLEGLSCRMMETSFFMSHESLILGKRPWYLRLRGKLYLLLQRNALRAPDQFEIPPNRVIELGTQVEI.

A run of 12 helical transmembrane segments spans residues 9-29, 49-69, 103-123, 137-157, 165-185, 213-233, 247-267, 276-296, 337-357, 363-383, 396-416, and 419-439; these read LPAI…TSPL, VFGF…IKYL, VIMG…TPAI, PQLD…LFMI, VGKL…GLGL, VSFI…ALYA, WFTV…ALLL, PFFL…AALA, IYIP…IVSF, LAAA…ILST, FVAL…TANL, and LLSG…VMTT.

This sequence belongs to the HAK/KUP transporter (TC 2.A.72) family.

Its subcellular location is the cell inner membrane. The catalysed reaction is K(+)(in) + H(+)(in) = K(+)(out) + H(+)(out). Responsible for the low-affinity transport of potassium into the cell. Likely operates as a K(+):H(+) symporter. The polypeptide is Low affinity potassium transport system protein Kup (Shigella sonnei (strain Ss046)).